The following is a 333-amino-acid chain: tRNA U34 carboxymethyltransferase (333 aa).

Carboxy-S-adenosyl-L-methionine-binding positions include Lys97, Trp111, Lys116, Gly136, 158-160, 189-190, Met205, Tyr209, and Arg324; these read DPS and IE.

The protein belongs to the class I-like SAM-binding methyltransferase superfamily. CmoB family. As to quaternary structure, homotetramer.

The catalysed reaction is carboxy-S-adenosyl-L-methionine + 5-hydroxyuridine(34) in tRNA = 5-carboxymethoxyuridine(34) in tRNA + S-adenosyl-L-homocysteine + H(+). Its function is as follows. Catalyzes carboxymethyl transfer from carboxy-S-adenosyl-L-methionine (Cx-SAM) to 5-hydroxyuridine (ho5U) to form 5-carboxymethoxyuridine (cmo5U) at position 34 in tRNAs. This is tRNA U34 carboxymethyltransferase from Chromohalobacter salexigens (strain ATCC BAA-138 / DSM 3043 / CIP 106854 / NCIMB 13768 / 1H11).